A 267-amino-acid polypeptide reads, in one-letter code: Probable tetrahydroxynaphthalene reductase MYCGRDRAFT_87994 (267 aa).

Positions 26, 72, 99, and 132 each coordinate NADP(+). Catalysis depends on S149, which acts as the Proton donor. The NADP(+) site is built by Y163, K167, I196, and T198. The active-site Proton acceptor is Y163. K167 serves as the catalytic Lowers pKa of active site Tyr.

The protein belongs to the short-chain dehydrogenases/reductases (SDR) family. As to quaternary structure, homotetramer.

It carries out the reaction scytalone + NADP(+) = naphthalene-1,3,6,8-tetrol + NADPH + H(+). Its pathway is pigment biosynthesis; melanin biosynthesis. Probable tetrahydroxynaphthalene reductase; part of the gene cluster 29 that mediates the biosynthesis dihydroxynaphthalene (DHN)-melanin, a bluish-green pigment and a structural component of the conidial wall. Catalyzes the NADPH-dependent reduction of 1,3,6,8-tetrahydroxynaphthalene (T4HN) into (+)-scytalone. The chain is Probable tetrahydroxynaphthalene reductase MYCGRDRAFT_87994 from Zymoseptoria tritici (strain CBS 115943 / IPO323) (Speckled leaf blotch fungus).